A 675-amino-acid polypeptide reads, in one-letter code: UvrABC system protein B (675 aa).

A Helicase ATP-binding domain is found at Glu32–Val417. An ATP-binding site is contributed by Gly45–Thr52. The Beta-hairpin signature appears at Tyr98–Ile121. The Helicase C-terminal domain occupies Gln436–Ile602. The region spanning Ile634 to Asn669 is the UVR domain.

The protein belongs to the UvrB family. Forms a heterotetramer with UvrA during the search for lesions. Interacts with UvrC in an incision complex.

The protein localises to the cytoplasm. Its function is as follows. The UvrABC repair system catalyzes the recognition and processing of DNA lesions. A damage recognition complex composed of 2 UvrA and 2 UvrB subunits scans DNA for abnormalities. Upon binding of the UvrA(2)B(2) complex to a putative damaged site, the DNA wraps around one UvrB monomer. DNA wrap is dependent on ATP binding by UvrB and probably causes local melting of the DNA helix, facilitating insertion of UvrB beta-hairpin between the DNA strands. Then UvrB probes one DNA strand for the presence of a lesion. If a lesion is found the UvrA subunits dissociate and the UvrB-DNA preincision complex is formed. This complex is subsequently bound by UvrC and the second UvrB is released. If no lesion is found, the DNA wraps around the other UvrB subunit that will check the other stand for damage. The chain is UvrABC system protein B from Neisseria meningitidis serogroup A / serotype 4A (strain DSM 15465 / Z2491).